A 349-amino-acid polypeptide reads, in one-letter code: Outer membrane protein assembly factor BamC (349 aa).

The first 24 residues, 1-24, serve as a signal peptide directing secretion; the sequence is MAILLQKSKVMKIAGMSLAMLLAA. Residue Cys25 is the site of N-palmitoyl cysteine attachment. The S-diacylglycerol cysteine moiety is linked to residue Cys25.

It belongs to the BamC family. Part of the Bam complex, which is composed of the outer membrane protein BamA, and four lipoproteins BamB, BamC, BamD and BamE.

It localises to the cell outer membrane. Part of the outer membrane protein assembly complex, which is involved in assembly and insertion of beta-barrel proteins into the outer membrane. In Photorhabdus asymbiotica subsp. asymbiotica (strain ATCC 43949 / 3105-77) (Xenorhabdus luminescens (strain 2)), this protein is Outer membrane protein assembly factor BamC.